We begin with the raw amino-acid sequence, 248 residues long: uncharacterized protein (248 aa).

The helical transmembrane segment at leucine 30–alanine 50 threads the bilayer. Disordered stretches follow at residues asparagine 59–proline 91 and threonine 208–arginine 248. Composition is skewed to polar residues over residues glutamate 210–asparagine 220 and serine 239–arginine 248.

The protein resides in the membrane. This is an uncharacterized protein from Caenorhabditis elegans.